The following is a 571-amino-acid chain: MERPEEGKQSPPPQPWGRLLRLGAEEGEPYVLLRKREWTIGRRRGCDLSFPSNKLVSGDHCRIAVDEKSGQVTLEDTSTSGTVINKLKVVKKQTCPLQTGDVIYLVYRKNEPEHRSGGGGISPKGSGPSVASDEVSSFATALPDRKTASFSSLEPQDQEDLEPMKKKMRGDGDLDLNGQLLVAQPRRNAQTVHEDVRAAAGKPDKMEETLTCIICQDLLHDCVSLQPCMHTFCAACYSGWMERSSLCPTCRCPVERICKNHILNNLVEAYLIQHPDKSRSEEDVQSMDARNKITQDMLQPKVRRSFSDEEGSSEDLLELSDVDSESSDISQPYVVCRQCPEYRRQAAQPPPCPAPEGEPGVPQALVDAPSTSVSLTTVQDYVCPLQGSHALCTCCFQPMPDRRAEREQNPRVAPQQCAVCLQPFCHLYWGCTRTGCFGCLAPFCELNLGDKCLDGVLNNNSYESDILKNYLATRGLTWKNMLTESLVALQRGVFLLSDYRVTGDTILCYCCGLRSFRELTYQYRQNIPASELPVAVTSRPDCYWGRNCRTQVKAHHAMKFNHICEQTRFKN.

The segment at 1–21 is disordered; it reads MERPEEGKQSPPPQPWGRLLR. Residues 38–89 form the FHA domain; it reads WTIGRRRGCDLSFPSNKLVSGDHCRIAVDEKSGQVTLEDTSTSGTVINKLKV. A disordered region spans residues 113 to 138; it reads EHRSGGGGISPKGSGPSVASDEVSSF. At Ser-152 the chain carries Phosphoserine. The RING-type zinc finger occupies 212 to 251; the sequence is CIICQDLLHDCVSLQPCMHTFCAACYSGWMERSSLCPTCR. A Phosphothreonine modification is found at Thr-294. The tract at residues 297-325 is disordered; that stretch reads MLQPKVRRSFSDEEGSSEDLLELSDVDSE. Acidic residues predominate over residues 308–325; that stretch reads DEEGSSEDLLELSDVDSE. The PBZ-type zinc-finger motif lies at 540–562; that stretch reads PDCYWGRNCRTQVKAHHAMKFNH.

It belongs to the CHFR family. As to quaternary structure, interacts with HDAC1 and HDAC2. Interacts with PML (with sumoylated form of PML). In terms of processing, poly-ADP-ribosylated. In addition to binding non covalently poly(ADP-ribose) via its PBZ-type zinc finger, the protein is also covalently poly-ADP-ribosylated by PARP1. Autoubiquitinated; may regulate its cellular level. Post-translationally, phosphorylated by PKB. Phosphorylation may affect its E3 ligase activity.

It is found in the nucleus. The protein localises to the PML body. It carries out the reaction S-ubiquitinyl-[E2 ubiquitin-conjugating enzyme]-L-cysteine + [acceptor protein]-L-lysine = [E2 ubiquitin-conjugating enzyme]-L-cysteine + N(6)-ubiquitinyl-[acceptor protein]-L-lysine.. It participates in protein modification; protein ubiquitination. In terms of biological role, E3 ubiquitin-protein ligase that functions in the antephase checkpoint by actively delaying passage into mitosis in response to microtubule poisons. Acts in early prophase before chromosome condensation, when the centrosome move apart from each other along the periphery of the nucleus. Probably involved in signaling the presence of mitotic stress caused by microtubule poisons by mediating the 'Lys-48'-linked ubiquitination of target proteins, leading to their degradation by the proteasome. Promotes the ubiquitination and subsequent degradation of AURKA and PLK1. Probably acts as a tumor suppressor, possibly by mediating the polyubiquitination of HDAC1, leading to its degradation. May also promote the formation of 'Lys-63'-linked polyubiquitin chains and functions with the specific ubiquitin-conjugating UBC13-MMS2 (UBE2N-UBE2V2) heterodimer. Substrates that are polyubiquitinated at 'Lys-63' are usually not targeted for degradation, but are rather involved in signaling cellular stress. This is E3 ubiquitin-protein ligase CHFR (CHFR) from Pongo abelii (Sumatran orangutan).